Here is a 21-residue protein sequence, read N- to C-terminus: Phospholipase A2 crotoxin basic chain (21 aa).

The protein belongs to the phospholipase A2 family. Group II subfamily. It depends on Ca(2+) as a cofactor. Expressed by the venom gland.

It is found in the secreted. The enzyme catalyses a 1,2-diacyl-sn-glycero-3-phosphocholine + H2O = a 1-acyl-sn-glycero-3-phosphocholine + a fatty acid + H(+). Its function is as follows. Snake venom phospholipase A2 (PLA2) that induces a conspicuous local myotoxic effect and moderate footpad edema. In vitro, it shows anticoagulant effects and is not cytotoxic on myoblast but is able to lyse myotubes. PLA2 catalyzes the calcium-dependent hydrolysis of the 2-acyl groups in 3-sn-phosphoglycerides. The polypeptide is Phospholipase A2 crotoxin basic chain (Crotalus durissus cumanensis (South American rattlesnake)).